The primary structure comprises 209 residues: Transcription antitermination protein NusB (209 aa).

The protein belongs to the NusB family.

In terms of biological role, involved in transcription antitermination. Required for transcription of ribosomal RNA (rRNA) genes. Binds specifically to the boxA antiterminator sequence of the ribosomal RNA (rrn) operons. In Cyanothece sp. (strain PCC 7425 / ATCC 29141), this protein is Transcription antitermination protein NusB.